A 488-amino-acid chain; its full sequence is 3-octaprenyl-4-hydroxybenzoate carboxy-lyase (488 aa).

N172 contacts Mn(2+). Prenylated FMN is bound by residues 175–177 (IYR), 189–191 (RWL), and 194–195 (RG). A Mn(2+)-binding site is contributed by E238. Catalysis depends on D287, which acts as the Proton donor.

This sequence belongs to the UbiD family. Homohexamer. The cofactor is prenylated FMN. Mn(2+) serves as cofactor.

Its subcellular location is the cell membrane. It carries out the reaction a 4-hydroxy-3-(all-trans-polyprenyl)benzoate + H(+) = a 2-(all-trans-polyprenyl)phenol + CO2. It functions in the pathway cofactor biosynthesis; ubiquinone biosynthesis. Catalyzes the decarboxylation of 3-octaprenyl-4-hydroxy benzoate to 2-octaprenylphenol, an intermediate step in ubiquinone biosynthesis. The sequence is that of 3-octaprenyl-4-hydroxybenzoate carboxy-lyase from Legionella pneumophila subsp. pneumophila (strain Philadelphia 1 / ATCC 33152 / DSM 7513).